A 299-amino-acid polypeptide reads, in one-letter code: MTTTTTNVTDLYPTRGATEVATPRQDPVVWGSPDAPGPVSAGDLQALDRDGFLAIDQLITPDEVGEYQRELERLTTDPAIRADERSIVEPQSKEIRSVFEVHKISEVFAKLVRDERVVGRARQILGSDVYVHQSRINVKPGFGASGFYWHSDFETWHAEDGLPNMRTISVSIALTENYDTNGGLMIMPGSHKTFLGCAGATPKDNYKKSLQMQDAGTPSDEGLTKMASEYGIKLFTGKAGSATWFDCNCMHGSGDNITPFPRSNVFIVFNSVENTAVEPFAAPIRRPEFIGARDFTPVK.

Positions 1–40 (MTTTTTNVTDLYPTRGATEVATPRQDPVVWGSPDAPGPVS) are disordered. Q133 is an L-ectoine binding site. K139 contributes to the 2-oxoglutarate binding site. Residues H150, D152, and H251 each contribute to the Fe cation site.

The protein belongs to the PhyH family. EctD subfamily. Homodimer. The cofactor is Fe(2+).

It catalyses the reaction L-ectoine + 2-oxoglutarate + O2 = 5-hydroxyectoine + succinate + CO2. Involved in the biosynthesis of 5-hydroxyectoine, called compatible solute, which helps organisms to survive extreme osmotic stress by acting as a highly soluble organic osmolyte. Catalyzes the 2-oxoglutarate-dependent selective hydroxylation of L-ectoine to yield (4S,5S)-5-hydroxyectoine. In Streptomyces coelicolor (strain ATCC BAA-471 / A3(2) / M145), this protein is Ectoine dioxygenase.